The following is a 99-amino-acid chain: Acylphosphatase (99 aa).

In terms of domain architecture, Acylphosphatase-like spans 5 to 97 (IRQVMISGRV…QPGERFSILS (93 aa)). Residues Arg-20 and Asn-38 contribute to the active site.

This sequence belongs to the acylphosphatase family.

The enzyme catalyses an acyl phosphate + H2O = a carboxylate + phosphate + H(+). The chain is Acylphosphatase (acyP) from Rhodopseudomonas palustris (strain ATCC BAA-98 / CGA009).